A 218-amino-acid polypeptide reads, in one-letter code: Small ribosomal subunit protein uS3c (218 aa).

The KH type-2 domain maps to 47–118 (VQKNMRTSSG…KLNIAVTRIA (72 aa)).

The protein belongs to the universal ribosomal protein uS3 family. Part of the 30S ribosomal subunit.

It is found in the plastid. The protein localises to the chloroplast. This chain is Small ribosomal subunit protein uS3c (rps3), found in Atropa belladonna (Belladonna).